A 187-amino-acid chain; its full sequence is METPAGKRRRDSRTVRDYIRTIVDFPHEGILFRDVTTLFADARGFRMAVDQLLAAYAGEDIDKVVGLEARGFILGGAVAHQLSVGFVPIRKKGKLPGAVISQAYALEYGKAVMEIHDDALKPGERVLIVDDLLATGGTAAAGISLCGRLGAEVVGCAFVIELPELGGRALLEGLGHEVHALTAFEGA.

The protein belongs to the purine/pyrimidine phosphoribosyltransferase family. Homodimer.

It is found in the cytoplasm. It catalyses the reaction AMP + diphosphate = 5-phospho-alpha-D-ribose 1-diphosphate + adenine. It participates in purine metabolism; AMP biosynthesis via salvage pathway; AMP from adenine: step 1/1. Its function is as follows. Catalyzes a salvage reaction resulting in the formation of AMP, that is energically less costly than de novo synthesis. This chain is Adenine phosphoribosyltransferase, found in Paracoccus denitrificans (strain Pd 1222).